The following is a 353-amino-acid chain: MEVISTNTNGSTIFKSGAIPMNGHHNGTSKHQNGHKNGTSEQQNGTISLDNGNELLGNSNCIKPGWFSEFSALWPGEAFSLKVEKLLFQGKSDYQDVMLFESATYGKVLTLDGAIQHTENGGFPYTEMIVHLPLGSIPNPKKVLIIGGGIGFTLFEMLRYPTIEKIDIVEIDDVVVDVSRKFFPYLAANFNDPRVTLVLGDGAAFVKAAQAEYYDAIIVDSSDPIGPAKDLFERPFFEAVAKALRPGGVVCTQAESIWLHMHIIKQIIANCRQVFKGSVNYAWTTVPTYPTGVIGYMLCSTEGPEIDFKNPVNPIDKETAQVKSKLAPLKFYNSDIHKAAFILPSFARSMIES.

A disordered region spans residues 15–50 (KSGAIPMNGHHNGTSKHQNGHKNGTSEQQNGTISLD). Over residues 25–50 (HNGTSKHQNGHKNGTSEQQNGTISLD) the composition is skewed to polar residues. Residues 64–301 (PGWFSEFSAL…GVIGYMLCST (238 aa)) enclose the PABS domain. Residues glutamine 95, glutamate 170, and 201–202 (DG) contribute to the S-adenosyl-L-methionine site. Aspartate 220 acts as the Proton acceptor in catalysis. Tyrosine 289 lines the S-adenosyl-L-methionine pocket.

The protein belongs to the class I-like SAM-binding methyltransferase superfamily. Putrescine methyltransferase family. Predominantly expressed in roots.

The catalysed reaction is putrescine + S-adenosyl-L-methionine = N-methylputrescine + S-adenosyl-L-homocysteine + H(+). It participates in alkaloid biosynthesis; nicotine biosynthesis. Functionally, involved in the biosynthesis of pyridine alkaloid natural products, leading mainly to the production of anabasine, anatabine, nicotine and nornicotine, effective deterrents against herbivores with antiparasitic and pesticide properties (neurotoxins); nornicotine serves as the precursor in the synthesis of the carcinogen compound N'-nitrosonornicotine (NNN). Methyltransferase that mediates the conversion of putrescine to N-methylputrescine. Promotes leaves ripening. The chain is Putrescine N-methyltransferase 2 from Nicotiana tabacum (Common tobacco).